Consider the following 227-residue polypeptide: ATP synthase F(0) complex subunit a (227 aa).

The next 6 helical transmembrane spans lie at 14–34 (LLGI…LPSP), 69–89 (WALI…LGLL), 98–118 (QLSM…LTGL), 139–159 (IPAL…ALGV), 174–194 (LIST…VLTA), and 196–216 (VLLL…YVFV).

The protein belongs to the ATPase A chain family. As to quaternary structure, component of the ATP synthase complex composed at least of ATP5F1A/subunit alpha, ATP5F1B/subunit beta, ATP5MC1/subunit c (homooctomer), MT-ATP6/subunit a, MT-ATP8/subunit 8, ATP5ME/subunit e, ATP5MF/subunit f, ATP5MG/subunit g, ATP5MK/subunit k, ATP5MJ/subunit j, ATP5F1C/subunit gamma, ATP5F1D/subunit delta, ATP5F1E/subunit epsilon, ATP5PF/subunit F6, ATP5PB/subunit b, ATP5PD/subunit d, ATP5PO/subunit OSCP. ATP synthase complex consists of a soluble F(1) head domain (subunits alpha(3) and beta(3)) - the catalytic core - and a membrane F(0) domain - the membrane proton channel (subunits c, a, 8, e, f, g, k and j). These two domains are linked by a central stalk (subunits gamma, delta, and epsilon) rotating inside the F1 region and a stationary peripheral stalk (subunits F6, b, d, and OSCP). Interacts with DNAJC30; interaction is direct.

The protein localises to the mitochondrion inner membrane. It carries out the reaction H(+)(in) = H(+)(out). In terms of biological role, subunit a, of the mitochondrial membrane ATP synthase complex (F(1)F(0) ATP synthase or Complex V) that produces ATP from ADP in the presence of a proton gradient across the membrane which is generated by electron transport complexes of the respiratory chain. ATP synthase complex consist of a soluble F(1) head domain - the catalytic core - and a membrane F(1) domain - the membrane proton channel. These two domains are linked by a central stalk rotating inside the F(1) region and a stationary peripheral stalk. During catalysis, ATP synthesis in the catalytic domain of F(1) is coupled via a rotary mechanism of the central stalk subunits to proton translocation. With the subunit c (ATP5MC1), forms the proton-conducting channel in the F(0) domain, that contains two crucial half-channels (inlet and outlet) that facilitate proton movement from the mitochondrial intermembrane space (IMS) into the matrix. Protons are taken up via the inlet half-channel and released through the outlet half-channel, following a Grotthuss mechanism. The sequence is that of ATP synthase F(0) complex subunit a from Struthio camelus (Common ostrich).